Consider the following 406-residue polypeptide: Acetate kinase (406 aa).

Asn7 provides a ligand contact to Mg(2+). ATP is bound at residue Lys14. Arg90 serves as a coordination point for substrate. The active-site Proton donor/acceptor is the Asp147. ATP contacts are provided by residues 207–211, 283–285, and 331–335; these read HLGNG, DMR, and GVGEN. A Mg(2+)-binding site is contributed by Glu385.

This sequence belongs to the acetokinase family. Homodimer. It depends on Mg(2+) as a cofactor. Requires Mn(2+) as cofactor.

It is found in the cytoplasm. It carries out the reaction acetate + ATP = acetyl phosphate + ADP. Its pathway is metabolic intermediate biosynthesis; acetyl-CoA biosynthesis; acetyl-CoA from acetate: step 1/2. In terms of biological role, catalyzes the formation of acetyl phosphate from acetate and ATP. Can also catalyze the reverse reaction. This is Acetate kinase from Fervidobacterium nodosum (strain ATCC 35602 / DSM 5306 / Rt17-B1).